A 278-amino-acid chain; its full sequence is Digeranylgeranylglyceryl phosphate synthase (278 aa).

The next 8 helical transmembrane spans lie at 17-37 (MASFGAFIGGLIASYFNLEMV), 40-60 (LIFASIVVFLVCGFGNALNDI), 91-111 (LLVFTGLCISLFNITCFLMAV), 129-149 (IIGNLIVAYLTGSVFIFGGIA), 153-173 (IDVTIMLFLCALFAMWSREII), 204-224 (LLLVFAVLLSSLPYLFGFFGI), 226-246 (YLISVVFCDLLFLIGIFPLLI), and 257-277 (SRNIKIVTNLVLVAFVIGSFF).

It belongs to the UbiA prenyltransferase family. DGGGP synthase subfamily. The cofactor is Mg(2+).

It is found in the cell membrane. The catalysed reaction is sn-3-O-(geranylgeranyl)glycerol 1-phosphate + (2E,6E,10E)-geranylgeranyl diphosphate = 2,3-bis-O-(geranylgeranyl)-sn-glycerol 1-phosphate + diphosphate. The protein operates within membrane lipid metabolism; glycerophospholipid metabolism. Functionally, prenyltransferase that catalyzes the transfer of the geranylgeranyl moiety of geranylgeranyl diphosphate (GGPP) to the C2 hydroxyl of (S)-3-O-geranylgeranylglyceryl phosphate (GGGP). This reaction is the second ether-bond-formation step in the biosynthesis of archaeal membrane lipids. This is Digeranylgeranylglyceryl phosphate synthase from Methanococcus maripaludis (strain C5 / ATCC BAA-1333).